The primary structure comprises 311 residues: T-cell acute lymphocytic leukemia protein 1 homolog (311 aa).

Over residues methionine 1–serine 14 the composition is skewed to pro residues. The segment at methionine 1–alanine 67 is disordered. The segment covering aspartate 15–glutamate 25 has biased composition (basic and acidic residues). In terms of domain architecture, bHLH spans valine 179 to leucine 231. The interval serine 265 to arginine 311 is disordered. The segment covering threonine 284–histidine 294 has biased composition (basic and acidic residues).

In terms of assembly, efficient DNA binding requires dimerization with another bHLH protein. Forms heterodimers with TCF3. In terms of processing, phosphorylated on serine residues.

It is found in the nucleus. Implicated in the genesis of hemopoietic malignancies. It may play an important role in hemopoietic differentiation. This chain is T-cell acute lymphocytic leukemia protein 1 homolog (TAL1), found in Gallus gallus (Chicken).